Here is a 353-residue protein sequence, read N- to C-terminus: Holliday junction branch migration complex subunit RuvB (353 aa).

A large ATPase domain (RuvB-L) region spans residues 4–190 (TDKLQAPRVI…FGIVARLEFY (187 aa)). ATP-binding positions include leucine 29, arginine 30, glycine 71, lysine 74, threonine 75, threonine 76, 137 to 139 (EDF), arginine 180, tyrosine 190, and arginine 227. Threonine 75 is a Mg(2+) binding site. The tract at residues 191–261 (TPHELAYIVG…VADAALLMLD (71 aa)) is small ATPAse domain (RuvB-S). The head domain (RuvB-H) stretch occupies residues 264–353 (HLGLDLMDRK…DESAELFSAP (90 aa)). Arginine 319 and arginine 324 together coordinate DNA.

Belongs to the RuvB family. Homohexamer. Forms an RuvA(8)-RuvB(12)-Holliday junction (HJ) complex. HJ DNA is sandwiched between 2 RuvA tetramers; dsDNA enters through RuvA and exits via RuvB. An RuvB hexamer assembles on each DNA strand where it exits the tetramer. Each RuvB hexamer is contacted by two RuvA subunits (via domain III) on 2 adjacent RuvB subunits; this complex drives branch migration. In the full resolvosome a probable DNA-RuvA(4)-RuvB(12)-RuvC(2) complex forms which resolves the HJ.

The protein localises to the cytoplasm. It carries out the reaction ATP + H2O = ADP + phosphate + H(+). In terms of biological role, the RuvA-RuvB-RuvC complex processes Holliday junction (HJ) DNA during genetic recombination and DNA repair, while the RuvA-RuvB complex plays an important role in the rescue of blocked DNA replication forks via replication fork reversal (RFR). RuvA specifically binds to HJ cruciform DNA, conferring on it an open structure. The RuvB hexamer acts as an ATP-dependent pump, pulling dsDNA into and through the RuvAB complex. RuvB forms 2 homohexamers on either side of HJ DNA bound by 1 or 2 RuvA tetramers; 4 subunits per hexamer contact DNA at a time. Coordinated motions by a converter formed by DNA-disengaged RuvB subunits stimulates ATP hydrolysis and nucleotide exchange. Immobilization of the converter enables RuvB to convert the ATP-contained energy into a lever motion, pulling 2 nucleotides of DNA out of the RuvA tetramer per ATP hydrolyzed, thus driving DNA branch migration. The RuvB motors rotate together with the DNA substrate, which together with the progressing nucleotide cycle form the mechanistic basis for DNA recombination by continuous HJ branch migration. Branch migration allows RuvC to scan DNA until it finds its consensus sequence, where it cleaves and resolves cruciform DNA. This is Holliday junction branch migration complex subunit RuvB from Aromatoleum aromaticum (strain DSM 19018 / LMG 30748 / EbN1) (Azoarcus sp. (strain EbN1)).